We begin with the raw amino-acid sequence, 150 residues long: Large ribosomal subunit protein bL9 (150 aa).

This sequence belongs to the bacterial ribosomal protein bL9 family.

Its function is as follows. Binds to the 23S rRNA. The chain is Large ribosomal subunit protein bL9 from Burkholderia vietnamiensis (strain G4 / LMG 22486) (Burkholderia cepacia (strain R1808)).